We begin with the raw amino-acid sequence, 221 residues long: Large ribosomal subunit protein uL4 (221 aa).

The interval 47–77 is disordered; sequence GTASTKTRGEVSGGGRKPWIQKHTGRARQGS.

It belongs to the universal ribosomal protein uL4 family. Part of the 50S ribosomal subunit.

In terms of biological role, one of the primary rRNA binding proteins, this protein initially binds near the 5'-end of the 23S rRNA. It is important during the early stages of 50S assembly. It makes multiple contacts with different domains of the 23S rRNA in the assembled 50S subunit and ribosome. Its function is as follows. Forms part of the polypeptide exit tunnel. The polypeptide is Large ribosomal subunit protein uL4 (Thermosipho melanesiensis (strain DSM 12029 / CIP 104789 / BI429)).